A 350-amino-acid chain; its full sequence is Cyclin-O (350 aa).

Residues Met-1–Pro-89 are disordered. Over residues Pro-28–Pro-42 the composition is skewed to basic residues. The residue at position 81 (Ser-81) is a Phosphoserine.

This sequence belongs to the cyclin family. Present in respiratory cells (at protein level).

Its subcellular location is the cytoplasm. It is found in the nucleus. It localises to the nucleolus. Functionally, specifically required for generation of multiciliated cells, possibly by promoting a cell cycle state compatible with centriole amplification and maturation. Acts downstream of MCIDAS to promote mother centriole amplification and maturation in preparation for apical docking. This is Cyclin-O from Homo sapiens (Human).